A 175-amino-acid polypeptide reads, in one-letter code: Probable DNA-directed RNA polymerase subunit delta (175 aa).

The 68-residue stretch at 14–81 (CSMIEVVHSV…GENRWGLRSW (68 aa)) folds into the HTH HARE-type domain. Residues 91-175 (ILPQPKPKKK…DETEEEEEEL (85 aa)) are disordered. The span at 106–175 (DGFDDYIEED…DETEEEEEEL (70 aa)) shows a compositional bias: acidic residues.

This sequence belongs to the RpoE family. RNAP is composed of a core of 2 alpha, a beta and a beta' subunits. The core is associated with a delta subunit and one of several sigma factors.

Functionally, participates in both the initiation and recycling phases of transcription. In the presence of the delta subunit, RNAP displays an increased specificity of transcription, a decreased affinity for nucleic acids, and an increased efficiency of RNA synthesis because of enhanced recycling. The protein is Probable DNA-directed RNA polymerase subunit delta of Bacillus anthracis.